Reading from the N-terminus, the 445-residue chain is 6-phosphogluconate dehydrogenase, decarboxylating (445 aa).

Residues 1–4 (AVMG), 22–24 (NRS), 63–65 (VKA), and N91 each bind NADP(+). Residues N91 and 117–119 (SGG) contribute to the substrate site. K172 (proton acceptor) is an active-site residue. 175-176 (HN) contacts substrate. Catalysis depends on E179, which acts as the Proton donor. 5 residues coordinate substrate: Y180, K249, R276, R434, and H440.

This sequence belongs to the 6-phosphogluconate dehydrogenase family. In terms of assembly, homodimer.

The enzyme catalyses 6-phospho-D-gluconate + NADP(+) = D-ribulose 5-phosphate + CO2 + NADPH. Its pathway is carbohydrate degradation; pentose phosphate pathway; D-ribulose 5-phosphate from D-glucose 6-phosphate (oxidative stage): step 3/3. Functionally, catalyzes the oxidative decarboxylation of 6-phosphogluconate to ribulose 5-phosphate and CO(2), with concomitant reduction of NADP to NADPH. This Shigella dysenteriae protein is 6-phosphogluconate dehydrogenase, decarboxylating (gnd).